A 178-amino-acid polypeptide reads, in one-letter code: ATP synthase subunit delta (178 aa).

The protein belongs to the ATPase delta chain family. In terms of assembly, F-type ATPases have 2 components, F(1) - the catalytic core - and F(0) - the membrane proton channel. F(1) has five subunits: alpha(3), beta(3), gamma(1), delta(1), epsilon(1). F(0) has three main subunits: a(1), b(2) and c(10-14). The alpha and beta chains form an alternating ring which encloses part of the gamma chain. F(1) is attached to F(0) by a central stalk formed by the gamma and epsilon chains, while a peripheral stalk is formed by the delta and b chains.

The protein resides in the cell membrane. F(1)F(0) ATP synthase produces ATP from ADP in the presence of a proton or sodium gradient. F-type ATPases consist of two structural domains, F(1) containing the extramembraneous catalytic core and F(0) containing the membrane proton channel, linked together by a central stalk and a peripheral stalk. During catalysis, ATP synthesis in the catalytic domain of F(1) is coupled via a rotary mechanism of the central stalk subunits to proton translocation. Its function is as follows. This protein is part of the stalk that links CF(0) to CF(1). It either transmits conformational changes from CF(0) to CF(1) or is implicated in proton conduction. This chain is ATP synthase subunit delta, found in Streptococcus equi subsp. zooepidemicus (strain MGCS10565).